Here is a 390-residue protein sequence, read N- to C-terminus: Flavohemoprotein (390 aa).

An N-acetylserine modification is found at S2. One can recognise a Globin domain in the interval 12 to 149 (PLTPTEINFL…LAQTLIDAEA (138 aa)). H96 lines the heme b pocket. Active-site charge relay system residues include Y106 and E148. The tract at residues 157 to 390 (WEEFKDFRVT…EFFGPTDPDC (234 aa)) is reductase. Residues 158 to 263 (EEFKDFRVTK…HAPVGTMKYD (106 aa)) form the FAD-binding FR-type domain. FAD-binding positions include Y196 and 214–217 (REYS). 277-282 (GIGITP) is an NADP(+) binding site. 382–385 (FFGP) is an FAD binding site.

The protein belongs to the globin family. Two-domain flavohemoproteins subfamily. In the C-terminal section; belongs to the flavoprotein pyridine nucleotide cytochrome reductase family. The cofactor is FAD. Requires heme b as cofactor.

It localises to the cytoplasm. The catalysed reaction is 2 nitric oxide + NADPH + 2 O2 = 2 nitrate + NADP(+) + H(+). The enzyme catalyses 2 nitric oxide + NADH + 2 O2 = 2 nitrate + NAD(+) + H(+). Functionally, is involved in NO detoxification in an aerobic process, termed nitric oxide dioxygenase (NOD) reaction that utilizes O(2) and NAD(P)H to convert NO to nitrate, which protects the fungus from various noxious nitrogen compounds. Therefore, plays a central role in the inducible response to nitrosative stress. In terms of biological role, in the presence of oxygen and NADH, it has NADH oxidase activity, which leads to the generation of superoxide and H(2)O(2). Under anaerobic conditions, it also exhibits nitric oxide reductase and FAD reductase activities. However, all these reactions are much lower than NOD activity. This Candida norvegensis (Yeast) protein is Flavohemoprotein.